Reading from the N-terminus, the 572-residue chain is Probable inactive glycosyltransferase 25 family member 3 (572 aa).

4 N-linked (GlcNAc...) asparagine glycosylation sites follow: N52, N130, N214, and N337. Residues 569–572 (RDEL) carry the Prevents secretion from ER motif.

It belongs to the glycosyltransferase 25 family.

It localises to the endoplasmic reticulum lumen. In terms of biological role, probable cell adhesion protein involved in leukocyte transmigration across the blood-brain barrier. Does not express any beta-galactosyltransferase activity in vitro. In Rattus norvegicus (Rat), this protein is Probable inactive glycosyltransferase 25 family member 3 (Cercam).